Reading from the N-terminus, the 184-residue chain is ATP synthase subunit b, chloroplastic (184 aa).

A helical membrane pass occupies residues 27-49 (LATNPINLSVVLGVLIFFGKGVL).

The protein belongs to the ATPase B chain family. In terms of assembly, F-type ATPases have 2 components, F(1) - the catalytic core - and F(0) - the membrane proton channel. F(1) has five subunits: alpha(3), beta(3), gamma(1), delta(1), epsilon(1). F(0) has four main subunits: a(1), b(1), b'(1) and c(10-14). The alpha and beta chains form an alternating ring which encloses part of the gamma chain. F(1) is attached to F(0) by a central stalk formed by the gamma and epsilon chains, while a peripheral stalk is formed by the delta, b and b' chains.

It localises to the plastid. It is found in the chloroplast thylakoid membrane. F(1)F(0) ATP synthase produces ATP from ADP in the presence of a proton or sodium gradient. F-type ATPases consist of two structural domains, F(1) containing the extramembraneous catalytic core and F(0) containing the membrane proton channel, linked together by a central stalk and a peripheral stalk. During catalysis, ATP synthesis in the catalytic domain of F(1) is coupled via a rotary mechanism of the central stalk subunits to proton translocation. In terms of biological role, component of the F(0) channel, it forms part of the peripheral stalk, linking F(1) to F(0). The sequence is that of ATP synthase subunit b, chloroplastic from Nicotiana sylvestris (Wood tobacco).